An 880-amino-acid chain; its full sequence is Leucine--tRNA ligase (880 aa).

Positions 49-59 (PYPSGRIHMGH) match the 'HIGH' region motif. The short motif at 638–642 (KMSKS) is the 'KMSKS' region element. An ATP-binding site is contributed by Lys-641.

This sequence belongs to the class-I aminoacyl-tRNA synthetase family.

The protein resides in the cytoplasm. It carries out the reaction tRNA(Leu) + L-leucine + ATP = L-leucyl-tRNA(Leu) + AMP + diphosphate. In Bartonella henselae (strain ATCC 49882 / DSM 28221 / CCUG 30454 / Houston 1) (Rochalimaea henselae), this protein is Leucine--tRNA ligase.